The sequence spans 224 residues: Transcription factor HEC3 (224 aa).

Disordered regions lie at residues 22-42 and 68-88; these read SSNNNNKNDDHHHQHNNDPIG and SLTTTTLLSGDQEDDEDEEEP. Basic and acidic residues predominate over residues 28 to 37; that stretch reads KNDDHHHQHN. Residues 68–77 are compositionally biased toward low complexity; that stretch reads SLTTTTLLSG. A compositionally biased stretch (acidic residues) spans 78–88; the sequence is DQEDDEDEEEP. Positions 125-174 constitute a bHLH domain; sequence ISDDPQSVAARHRRERISERIRILQRLVPGGTKMDTASMLDEAIRYVKFL. The interval 183–224 is disordered; sequence NNTGYTPPPPQDQASQAVTTSWVSPPPPPSFGRGGRGVGELI. Positions 194–204 are enriched in polar residues; sequence DQASQAVTTSW. Residues 214 to 224 are compositionally biased toward gly residues; the sequence is GRGGRGVGELI.

Homodimer. Interacts with SPT. As to expression, gynoecium.

The protein localises to the nucleus. Required for the female reproductive tract development and fertility. This chain is Transcription factor HEC3 (HEC3), found in Arabidopsis thaliana (Mouse-ear cress).